The primary structure comprises 434 residues: Beta-enolase (434 aa).

Position 2 is an N-acetylalanine (Ala-2). The residue at position 72 (Thr-72) is a Phosphothreonine. Ser-83 and Ser-157 each carry phosphoserine. His-158 and Glu-167 together coordinate substrate. Phosphoserine is present on Ser-176. Thr-205 is modified (phosphothreonine). Glu-210 functions as the Proton donor in the catalytic mechanism. Thr-229 bears the Phosphothreonine mark. Tyr-236 bears the Phosphotyrosine mark. Mg(2+) is bound at residue Asp-245. Phosphoserine is present on Ser-263. The substrate site is built by Glu-293 and Asp-318. 2 residues coordinate Mg(2+): Glu-293 and Asp-318. Lys-343 serves as the catalytic Proton acceptor. Substrate-binding positions include 370 to 373 (SHRS) and Lys-394.

This sequence belongs to the enolase family. As to quaternary structure, mammalian enolase is composed of 3 isozyme subunits, alpha, beta and gamma, which can form homodimers or heterodimers which are cell-type and development-specific. Interacts with PNKD. Mg(2+) serves as cofactor. As to expression, the alpha/alpha homodimer is expressed in embryo and in most adult tissues. The alpha/beta heterodimer and the beta/beta homodimer are found in striated muscle, and the alpha/gamma heterodimer and the gamma/gamma homodimer in neurons.

Its subcellular location is the cytoplasm. The enzyme catalyses (2R)-2-phosphoglycerate = phosphoenolpyruvate + H2O. It functions in the pathway carbohydrate degradation; glycolysis; pyruvate from D-glyceraldehyde 3-phosphate: step 4/5. Its function is as follows. Glycolytic enzyme that catalyzes the conversion of 2-phosphoglycerate to phosphoenolpyruvate. Appears to have a function in striated muscle development and regeneration. The protein is Beta-enolase (ENO3) of Homo sapiens (Human).